The following is a 1382-amino-acid chain: MKAPAVLAPGILVLLFTLVPRSHGECKEALVKSEMNVNMKYQLPNFTAETPIQNVLLHQHHVYLGAINHIYVLNDKDLQKVAEYTTGPVLEHPDCLPCQDCSSKANSSGAVWKDNINLALLVDKYYDDQLISCGSVNRGTCQRHVLPPDNPADIQSGVYCMFSPQADEEPGQCPDCVVSPLGAKVLLSKKQRFIYFFVGNTINSSYLPDHSLHSISVRRLKETQDGFKFLTDQSYIDVLPEFRDSYPIKYVHAFESNHFIYFLTVQKETLDAQTFHTRIIRFCSKDSGLHSYMEMPLECILTEKRRKRATREEVFNILQAAYVSKPGAHLARQIGATPNDDILYGVFAQSKPDSAEPMNRSAVCAFPIKYINEFFNKIVNKNNVKCLQHFYGPNHEHCFNRTLLRNSSDCEARSDEYRTELTTALQRVDLFMGQFNQVLLTSISTFIKGDLTIANLGTSEGRFMQVVISRTILNVPHVNFRLDSHPVSPEVVVEHPLNQNGYTLVVTGNKITKIPLNGLGCGHFQSCSQCLSAPPFVQCGWCHDKCVPSEECPSGTWTQEICLPAIYKVFPASAPLEGGTTLTICGWDFGFRKNNKFDLKKTKVLLGNESCALNLSESTTNTLKCTVGATTHEHFNMSITVSNSRGRTQYSTFSYVAPVITSISPSYGPKAGGTLLTLTGKYLDSGNSRHISIGGKTCTLKSMSNSILECYTPAQTISTEFPVKLEIDLASRETSSFSYREDPIVDEFYPTKSFISGGSTITGVGKNLDSVSVPRMVISVHEAGSNFTVACQHRSNSEIICCTTPSLQQLNLHLPLKTKAFFMLDGILSKHFDLTYVHNPVFKPFEKPVMISMGNENVLEIKGNDIDPEAVKGEVLKVGNKSCENIHSDSEAVLCTVPNDLLKLNSELNIEWKQAVSSTVLGKVIVQPDQNFMGLIVGGVSISIILLLLLGLFLWLKKKKRIKDLGSELVRYDARVHTPHLDRLVSARSVSPTTEMVSNESVDYRATFPEDQFPNSSQNGSCRQVQYPLTDLSPILTSGDSDISSPLLQNTVHIDLSALNPELVQAVQHVVIGPSSLIVHFSEVIGRGHFGCVYHGTLLDNDGKKIHCAVKSLNRITDIGEVSQFLTEGIIMKDFSHPNVLSLLGICLRSEGSPLVVLPYMKHGDLRNFIRNETHNPTVKDLIGFGLQVAKGMKYLASKKFVHRDLAARNCMLDEKFTVKVADFGLARDMYDKEYYSVHNKTGAKLPVKWMALESLQTQKFTTKSDVWSFGVLLWELMTRGAPPYPDVNTFDITVYLLQGRRLLQPEYCPDALYEVMLKCWHPKAEMRPSFSELVSRISTIFSTFIGEHYVHVNATYVNVKCVAPYPSLLSSQDNVDGTVDT.

An N-terminal signal peptide occupies residues 1–24; that stretch reads MKAPAVLAPGILVLLFTLVPRSHG. Residues 25-933 lie on the Extracellular side of the membrane; it reads ECKEALVKSE…VIVQPDQNFM (909 aa). The region spanning 27-516 is the Sema domain; sequence KEALVKSEMN…TGNKITKIPL (490 aa). N-linked (GlcNAc...) asparagine glycosylation occurs at N45. 4 cysteine pairs are disulfide-bonded: C95-C101, C98-C160, C133-C141, and C173-C176. Residue N106 is glycosylated (N-linked (GlcNAc...) asparagine). N203 and N359 each carry an N-linked (GlcNAc...) asparagine glycan. 2 disulfide bridges follow: C299–C364 and C386–C398. Residues N400 and N406 are each glycosylated (N-linked (GlcNAc...) asparagine). Intrachain disulfides connect C521–C539, C527–C562, C530–C546, and C542–C552. IPT/TIG domains follow at residues 564-656, 658-740, and 743-837; these read PAIY…FSYV, PVIT…FSYR, and PIVD…LTYV. T583 is a glycosylation site (O-linked (Man) threonine). Residues N608, N614, and N636 are each glycosylated (N-linked (GlcNAc...) asparagine). 2 O-linked (Man) threonine glycosylation sites follow: T677 and T762. N786 and N880 each carry an N-linked (GlcNAc...) asparagine glycan. The chain crosses the membrane as a helical span at residues 934 to 956; that stretch reads GLIVGGVSISIILLLLLGLFLWL. Topologically, residues 957 to 1382 are cytoplasmic; it reads KKKKRIKDLG…QDNVDGTVDT (426 aa). Residue S967 is modified to Phosphoserine. The residue at position 978 (T978) is a Phosphothreonine. Phosphoserine occurs at positions 991, 998, and 1001. A Phosphotyrosine modification is found at Y1004. In terms of domain architecture, Protein kinase spans 1079 to 1346; it reads VHFSEVIGRG…RISTIFSTFI (268 aa). ATP-binding positions include 1085-1093 and K1111; that span reads IGRGHFGCV. D1205 serves as the catalytic Proton acceptor. Positions 1213 to 1382 are interaction with RANBP9; it reads LDEKFTVKVA…QDNVDGTVDT (170 aa). The residue at position 1231 (Y1231) is a Phosphotyrosine. 2 positions are modified to phosphotyrosine; by autocatalysis: Y1235 and Y1236. T1290 carries the post-translational modification Phosphothreonine. The interval 1321-1360 is interaction with MUC20; the sequence is WHPKAEMRPSFSELVSRISTIFSTFIGEHYVHVNATYVNV. Y1350 and Y1357 each carry phosphotyrosine; by autocatalysis. Y1366 carries the phosphotyrosine modification.

The protein belongs to the protein kinase superfamily. Tyr protein kinase family. Heterodimer made of an alpha chain (50 kDa) and a beta chain (145 kDa) which are disulfide linked. Binds PLXNB1. Interacts when phosphorylated with downstream effectors including STAT3, PIK3R1, SRC, PCLG1, GRB2 and GAB1. Interacts with SPSB1, SPSB2 and SPSB4. Interacts with INPP5D/SHIP1. When phosphorylated at Tyr-1357, interacts with INPPL1/SHIP2. Interacts with RANBP9 and RANBP10, as well as SPSB1, SPSB2, SPSB3 and SPSB4. SPSB1 binding occurs in the presence and in the absence of HGF, however HGF treatment has a positive effect on this interaction. Interacts with MUC20; prevents interaction with GRB2 and suppresses hepatocyte growth factor-induced cell proliferation. Interacts with GRB10. Interacts with PTPN1 and PTPN2. Interacts with HSP90AA1 and HSP90AB1; the interaction suppresses MET kinase activity. Interacts with tensin TNS3. Interacts (when phosphorylated) with tensin TNS4 (via SH2 domain); the interaction increases MET protein stability by inhibiting MET endocytosis and subsequent lysosomal degradation. Autophosphorylated in response to ligand binding on Tyr-1235 and Tyr-1236 in the kinase domain leading to further phosphorylation of Tyr-1350 and Tyr-1357 in the C-terminal multifunctional docking site. Dephosphorylated by PTPRJ at Tyr-1350 and Tyr-1366. Dephosphorylated by PTPN1 and PTPN2. In terms of processing, ubiquitinated. Ubiquitination by CBL regulates the receptor stability and activity through proteasomal degradation. Post-translationally, O-mannosylation of IPT/TIG domains by TMEM260 is required for protein maturation. O-mannosylated residues are composed of single mannose glycans that are not elongated or modified.

Its subcellular location is the membrane. It carries out the reaction L-tyrosyl-[protein] + ATP = O-phospho-L-tyrosyl-[protein] + ADP + H(+). In its inactive state, the C-terminal tail interacts with the catalytic domain and inhibits the kinase activity. Upon ligand binding, the C-terminal tail is displaced and becomes phosphorylated, thus increasing the kinase activity. Receptor tyrosine kinase that transduces signals from the extracellular matrix into the cytoplasm by binding to hepatocyte growth factor/HGF ligand. Regulates many physiological processes including proliferation, scattering, morphogenesis and survival. Ligand binding at the cell surface induces autophosphorylation of MET on its intracellular domain that provides docking sites for downstream signaling molecules. Following activation by ligand, interacts with the PI3-kinase subunit PIK3R1, PLCG1, SRC, GRB2, STAT3 or the adapter GAB1. Recruitment of these downstream effectors by MET leads to the activation of several signaling cascades including the RAS-ERK, PI3 kinase-AKT, or PLCgamma-PKC. The RAS-ERK activation is associated with the morphogenetic effects while PI3K/AKT coordinates prosurvival effects. During embryonic development, MET signaling plays a role in gastrulation, development and migration of muscles and neuronal precursors, angiogenesis and kidney formation. In adults, participates in wound healing as well as organ regeneration and tissue remodeling. Also promotes differentiation and proliferation of hematopoietic cells. The sequence is that of Hepatocyte growth factor receptor (MET) from Oryctolagus cuniculus (Rabbit).